We begin with the raw amino-acid sequence, 762 residues long: 5-methyltetrahydropteroyltriglutamate--homocysteine methyltransferase (762 aa).

5-methyltetrahydropteroyltri-L-glutamate is bound by residues 17-20 (REWK) and Lys111. Residues 435 to 437 (IGS) and Glu488 each bind L-homocysteine. L-methionine is bound by residues 435–437 (IGS) and Glu488. 5-methyltetrahydropteroyltri-L-glutamate is bound by residues 519 to 520 (RC) and Trp565. Asp603 serves as a coordination point for L-homocysteine. Asp603 serves as a coordination point for L-methionine. Residue Glu609 coordinates 5-methyltetrahydropteroyltri-L-glutamate. Zn(2+)-binding residues include His645, Cys647, and Glu669. The active-site Proton donor is His698. Residue Cys730 participates in Zn(2+) binding.

This sequence belongs to the vitamin-B12 independent methionine synthase family. The cofactor is Zn(2+).

The enzyme catalyses 5-methyltetrahydropteroyltri-L-glutamate + L-homocysteine = tetrahydropteroyltri-L-glutamate + L-methionine. The protein operates within amino-acid biosynthesis; L-methionine biosynthesis via de novo pathway; L-methionine from L-homocysteine (MetE route): step 1/1. Its function is as follows. Catalyzes the transfer of a methyl group from 5-methyltetrahydrofolate to homocysteine resulting in methionine formation. The protein is 5-methyltetrahydropteroyltriglutamate--homocysteine methyltransferase of Bacillus cereus (strain ZK / E33L).